A 21-amino-acid polypeptide reads, in one-letter code: Endo-1,4-beta-xylanase A (21 aa).

Belongs to the glycosyl hydrolase 10 (cellulase F) family.

The enzyme catalyses Endohydrolysis of (1-&gt;4)-beta-D-xylosidic linkages in xylans.. The protein operates within glycan degradation; xylan degradation. This chain is Endo-1,4-beta-xylanase A, found in Dictyoglomus sp. (strain B4A).